The chain runs to 299 residues: GTPase Era (299 aa).

Residues 8-176 (RCGYVAIVGR…EKLVGERLPE (169 aa)) enclose the Era-type G domain. Residues 16–23 (GRPNVGKS) are G1. 16-23 (GRPNVGKS) contributes to the GTP binding site. Positions 42–46 (QTTRH) are G2. Residues 63 to 66 (DTPG) form a G3 region. GTP-binding positions include 63 to 67 (DTPGL) and 125 to 128 (NKAD). The tract at residues 125-128 (NKAD) is G4. Residues 155–157 (ISA) form a G5 region. The KH type-2 domain maps to 199 to 283 (IREKIMRQLG…MLNLWVKVKG (85 aa)).

It belongs to the TRAFAC class TrmE-Era-EngA-EngB-Septin-like GTPase superfamily. Era GTPase family. As to quaternary structure, monomer.

Its subcellular location is the cytoplasm. The protein localises to the cell inner membrane. An essential GTPase that binds both GDP and GTP, with rapid nucleotide exchange. Plays a role in 16S rRNA processing and 30S ribosomal subunit biogenesis and possibly also in cell cycle regulation and energy metabolism. The chain is GTPase Era from Ectopseudomonas mendocina (strain ymp) (Pseudomonas mendocina).